Consider the following 240-residue polypeptide: NAD-dependent protein deacylase Sir2 (240 aa).

The region spanning 1–235 (MQVTVLSGAG…PTLLQRLPEL (235 aa)) is the Deacetylase sirtuin-type domain. 8-28 (GAGISAESGVPTFRDAETGLW) contributes to the NAD(+) binding site. Tyr53 and Arg56 together coordinate substrate. 86–89 (QNID) contacts NAD(+). Residue His104 is the Proton acceptor of the active site. Cys112, Cys115, Cys138, and Cys140 together coordinate Zn(2+). Residues 177-179 (GTS), 203-205 (NPE), and Ala221 each bind NAD(+).

This sequence belongs to the sirtuin family. Class III subfamily. As to quaternary structure, interacts with both Ku and LigD; may form a trimeric complex during NHEJ. It depends on Zn(2+) as a cofactor.

It is found in the cytoplasm. It catalyses the reaction N(6)-succinyl-L-lysyl-[protein] + NAD(+) + H2O = 2''-O-succinyl-ADP-D-ribose + nicotinamide + L-lysyl-[protein]. The catalysed reaction is N(6)-acetyl-L-lysyl-[protein] + NAD(+) + H2O = 2''-O-acetyl-ADP-D-ribose + nicotinamide + L-lysyl-[protein]. NAD-dependent lysine deacetylase and desuccinylase that specifically removes acetyl and succinyl groups on target proteins. Modulates the activities of several proteins which are inactive in their acylated form. Functionally, involved in non-homologous end joining (NHEJ) repair of blunt, 5' overhang and 3' overhang DNA double strand breaks (DSB). Overexpression increases the efficiency of NHEJ of the above DSBs 2-fold with no effect on repair fidelity. This is NAD-dependent protein deacylase Sir2 (sir2) from Mycolicibacterium smegmatis (strain ATCC 700084 / mc(2)155) (Mycobacterium smegmatis).